We begin with the raw amino-acid sequence, 70 residues long: Small ribosomal subunit protein bS21C (70 aa).

Positions 38–70 (YEKPTTERKRKKAAAVARLRKQVRRSMPPKKKY) are disordered. The segment covering 45–70 (RKRKKAAAVARLRKQVRRSMPPKKKY) has biased composition (basic residues).

Belongs to the bacterial ribosomal protein bS21 family.

The polypeptide is Small ribosomal subunit protein bS21C (Burkholderia thailandensis (strain ATCC 700388 / DSM 13276 / CCUG 48851 / CIP 106301 / E264)).